A 124-amino-acid polypeptide reads, in one-letter code: Small ribosomal subunit protein uS13 (124 aa).

A disordered region spans residues 95–124 (GLPVRGQRTKTNARTRKGPKRTIAGKKKAK).

The protein belongs to the universal ribosomal protein uS13 family. In terms of assembly, part of the 30S ribosomal subunit. Forms a loose heterodimer with protein S19. Forms two bridges to the 50S subunit in the 70S ribosome.

Its function is as follows. Located at the top of the head of the 30S subunit, it contacts several helices of the 16S rRNA. In the 70S ribosome it contacts the 23S rRNA (bridge B1a) and protein L5 of the 50S subunit (bridge B1b), connecting the 2 subunits; these bridges are implicated in subunit movement. Contacts the tRNAs in the A and P-sites. This chain is Small ribosomal subunit protein uS13, found in Rhodococcus jostii (strain RHA1).